Here is a 1528-residue protein sequence, read N- to C-terminus: Zinc finger FYVE domain-containing protein 16 (1528 aa).

Ser-120 carries the phosphoserine modification. The tract at residues 629-664 is disordered; the sequence is TQAVGGARPKQLLSLPPGTRSSKELNKPDVVDVPES. Residues 649-658 show a composition bias toward basic and acidic residues; sequence SSKELNKPDV. An FYVE-type zinc finger spans residues 735-793; the sequence is DSEAPNCMNCQVKFTFTKRRHHCRACGKVFCGVCCNRKCKLQYLEKEARVCVICYETIN. The Zn(2+) site is built by Cys-741, Cys-744, Cys-757, Cys-760, Cys-765, Cys-768, Cys-785, and Cys-788. Phosphoserine occurs at positions 803, 833, 884, and 927. Positions 819-849 are disordered; it reads TDQPLQETQTSSTPSPTTLPISALKQPNVEG. Low complexity predominate over residues 821–838; it reads QPLQETQTSSTPSPTTLP. The interval 928–949 is disordered; sequence PTCHTAPVERLPGNTGTEGLPM.

In terms of assembly, interacts (via C-terminus) with TOM1 (via C-terminus); interaction is required to target TOM1 to endosomes. Does not interact with TOM1L1 or TOM1L2.

It localises to the cytoplasm. Its subcellular location is the early endosome membrane. Its function is as follows. May be involved in regulating membrane trafficking in the endosomal pathway. Overexpression induces endosome aggregation. Required to target TOM1 to endosomes. This is Zinc finger FYVE domain-containing protein 16 (Zfyve16) from Mus musculus (Mouse).